Reading from the N-terminus, the 234-residue chain is Large ribosomal subunit protein uL1 (234 aa).

This sequence belongs to the universal ribosomal protein uL1 family. Part of the 50S ribosomal subunit.

Binds directly to 23S rRNA. The L1 stalk is quite mobile in the ribosome, and is involved in E site tRNA release. Its function is as follows. Protein L1 is also a translational repressor protein, it controls the translation of the L11 operon by binding to its mRNA. The protein is Large ribosomal subunit protein uL1 of Wolinella succinogenes (strain ATCC 29543 / DSM 1740 / CCUG 13145 / JCM 31913 / LMG 7466 / NCTC 11488 / FDC 602W) (Vibrio succinogenes).